Reading from the N-terminus, the 1712-residue chain is Latent-transforming growth factor beta-binding protein 1 (1712 aa).

A signal peptide spans 1–23; it reads MAGAWLRWGLLLWAGLLAWSAHG. Positions 65–118 are disordered; that stretch reads TAASSRALAGPPAERTRRTSQPGGAALPGLRSPLPPEPARPGGPSRQLHSKAGA. In terms of domain architecture, EGF-like 1 spans 181 to 213; that stretch reads TKPSCVPPCQNGGMCLRPQLCVCKPGSKGKACE. Disulfide bonds link cysteine 185-cysteine 195, cysteine 189-cysteine 201, and cysteine 203-cysteine 212. 2 N-linked (GlcNAc...) asparagine glycosylation sites follow: asparagine 339 and asparagine 370. The EGF-like 2 domain occupies 391-423; the sequence is RVVICHLPCMNGGQCSSRDKCQCPPNFTGKLCQ. 6 disulfides stabilise this stretch: cysteine 395–cysteine 405, cysteine 399–cysteine 411, cysteine 413–cysteine 422, cysteine 551–cysteine 573, cysteine 560–cysteine 586, and cysteine 574–cysteine 589. A glycan (N-linked (GlcNAc...) asparagine) is linked at asparagine 416. Positions 549-601 constitute a TB 1 domain; that stretch reads GRCFQETIGSQCGKALPGLSKQEDCCGTVGTSWGFNKCQKCPKKQSYHGYTQM. N-linked (GlcNAc...) asparagine glycosylation is present at asparagine 612. An EGF-like 3; calcium-binding domain is found at 618–658; that stretch reads DINECQLQGVCPNGECLNTMGSYRCSCKMGFGPDPTFSSCV. Intrachain disulfides connect cysteine 622–cysteine 633, cysteine 628–cysteine 642, cysteine 644–cysteine 657, cysteine 671–cysteine 694, cysteine 681–cysteine 706, cysteine 695–cysteine 709, and cysteine 696–cysteine 721. An O-linked (Glc) serine glycan is attached at serine 639. One can recognise a TB 2 domain in the interval 669-721; the sequence is GPCYRLVSPGRHCMHPLSVHLTKQICCCSVGKAWGPHCEKCPLPGTAAFKEIC. Positions 753–799 are disordered; that stretch reads NTQPVAKSTHPPPLPAKEEPVEALTSSWEHGPRGAEPEVVTAPPEKE. Threonine 761 and threonine 793 each carry an O-linked (GalNAc...) threonine glycan. In terms of domain architecture, EGF-like 4; calcium-binding spans 865 to 906; sequence EINECTVNPDICGAGHCINLPVRYTCICYEGYKFSEQLRKCV. Disulfide bonds link cysteine 869–cysteine 881, cysteine 876–cysteine 890, cysteine 892–cysteine 905, cysteine 911–cysteine 923, cysteine 918–cysteine 932, cysteine 934–cysteine 947, cysteine 953–cysteine 964, cysteine 959–cysteine 973, cysteine 976–cysteine 988, cysteine 994–cysteine 1005, cysteine 1000–cysteine 1014, cysteine 1017–cysteine 1028, cysteine 1034–cysteine 1045, cysteine 1040–cysteine 1054, cysteine 1056–cysteine 1069, cysteine 1075–cysteine 1086, cysteine 1081–cysteine 1095, cysteine 1097–cysteine 1110, cysteine 1116–cysteine 1127, cysteine 1122–cysteine 1136, cysteine 1138–cysteine 1151, cysteine 1157–cysteine 1169, cysteine 1164–cysteine 1178, cysteine 1180–cysteine 1192, cysteine 1198–cysteine 1210, cysteine 1204–cysteine 1219, cysteine 1221–cysteine 1234, cysteine 1240–cysteine 1252, cysteine 1246–cysteine 1261, cysteine 1263–cysteine 1276, cysteine 1282–cysteine 1294, cysteine 1289–cysteine 1303, cysteine 1305–cysteine 1319, cysteine 1340–cysteine 1363, cysteine 1350–cysteine 1375, cysteine 1364–cysteine 1380, and cysteine 1365–cysteine 1392. The EGF-like 5; calcium-binding domain occupies 907 to 948; that stretch reads DIDECAQVRHLCSQGRCENTEGSFLCVCPAGFMASEEGTNCI. The O-linked (Glc) serine glycan is linked to serine 929. Residues 949 to 989 enclose the EGF-like 6; calcium-binding domain; sequence DVDECLRPDMCRDGRCINTAGAFRCEYCDSGYRMSRRGYCE. Asparagine 966 carries the post-translational modification (3R)-3-hydroxyasparagine. The EGF-like 7; calcium-binding domain maps to 990–1029; that stretch reads DIDECLKPSTCPEEQCVNTPGSYQCVPCTEGFRGWNGQCL. O-linked (Glc) serine glycosylation occurs at serine 1011. The region spanning 1030–1070 is the EGF-like 8; calcium-binding domain; sequence DVDECLQPKVCTNGSCTNLEGSYMCSCHRGYSPTPDHRHCQ. N-linked (GlcNAc...) asparagine glycosylation occurs at asparagine 1042. O-linked (Glc) serine glycosylation is present at serine 1051. The EGF-like 9; calcium-binding domain occupies 1071-1111; it reads DIDECQQGNLCMNGQCRNTDGSFRCTCGQGYQLSAAKDQCE. In terms of domain architecture, EGF-like 10; calcium-binding spans 1112 to 1152; it reads DIDECEHHHLCSHGQCRNTEGSFQCVCNQGYRASVLGDHCE. Asparagine 1129 is modified ((3R)-3-hydroxyasparagine). Serine 1133 carries an O-linked (Glc) serine glycan. Residues 1153-1193 form the EGF-like 11; calcium-binding domain; it reads DINECLEDSSVCQGGDCINTAGSYDCTCPDGFQLNDNKGCQ. Residues 1194-1235 enclose the EGF-like 12; calcium-binding domain; the sequence is DINECAQPGLCGSHGECLNTQGSFHCVCEQGFSISADGRTCE. A glycan (O-linked (Glc) serine) is linked at serine 1216. The 42-residue stretch at 1236–1277 folds into the EGF-like 13; calcium-binding domain; that stretch reads DIDECVNNTVCDSHGFCDNTAGSFRCLCYQGFQAPQDGQGCV. An N-linked (GlcNAc...) asparagine glycan is attached at asparagine 1242. Residues 1278–1320 enclose the EGF-like 14; calcium-binding domain; the sequence is DVNECELLSGVCGEAFCENVEGSFLCVCADENQEYSPMTGQCR. Residues 1335 to 1402 form an 8-Cys3 region region; that stretch reads EEKKECYYNL…PRGKGLVPAG (68 aa). The TB 3 domain maps to 1338–1392; it reads KECYYNLNDASLCDNVLAPNVTKQECCCTSGAGWGDNCEIFPCPVQGTAEFTEMC. The N-linked (GlcNAc...) asparagine glycan is linked to asparagine 1357. Phosphoserine is present on serine 1405. One can recognise an EGF-like 15; calcium-binding domain in the interval 1415-1457; it reads DADECLLFGEEICKNGYCLNTQPGYECYCKQGTYYDPVKLQCF. 10 disulfides stabilise this stretch: cysteine 1419-cysteine 1432, cysteine 1427-cysteine 1441, cysteine 1443-cysteine 1456, cysteine 1462-cysteine 1473, cysteine 1468-cysteine 1482, cysteine 1484-cysteine 1497, cysteine 1517-cysteine 1541, cysteine 1527-cysteine 1553, cysteine 1542-cysteine 1556, and cysteine 1543-cysteine 1568. The EGF-like 16; calcium-binding domain occupies 1458–1498; sequence DMDECQDPNSCIDGQCVNTEGSYNCFCTHPMVLDASEKRCV. Serine 1479 carries O-linked (Glc) serine glycosylation. Residues 1498–1712 are C-terminal domain; the sequence is VQPTESNEQI…LNLDKESDLE (215 aa). Residues 1515-1568 form the TB 4 domain; it reads DLCWEHLSEEYVCSRPLVGKQTTYTECCCLYGEAWGMQCALCPMKDSDDYAQLC. Phosphoserine is present on residues serine 1588 and serine 1607. Residues 1612 to 1652 enclose the EGF-like 17 domain; the sequence is QAEECGILNGCENGRCVRVQEGYTCDCFDGYHLDMAKMTCV. 6 disulfides stabilise this stretch: cysteine 1616/cysteine 1627, cysteine 1622/cysteine 1636, cysteine 1638/cysteine 1651, cysteine 1657/cysteine 1672, cysteine 1667/cysteine 1681, and cysteine 1683/cysteine 1696. The EGF-like 18; calcium-binding domain maps to 1653 to 1697; that stretch reads DVNECSELNNRMSLCKNAKCINTEGSYKCLCLPGYIPSDKPNYCT. O-linked (Glc) serine glycosylation is present at serine 1678.

The protein belongs to the LTBP family. In terms of assembly, interacts with TGFB1; associates via disulfide bonds with the Latency-associated peptide chain (LAP) regulatory chain of TGFB1, leading to regulate activation of TGF-beta-1. LTBP1 does not bind directly to TGF-beta-1, the active chain of TGFB1. Interacts (via C-terminal domain) with FBN1 (via N-terminal domain). Interacts with FBN2. Interacts with ADAMTSL2. Interacts with EFEMP2. Post-translationally, contains hydroxylated asparagine residues. In terms of processing, two intrachain disulfide bonds from the TB3 domain are rearranged upon TGFB1 binding, and form interchain bonds with TGFB1 propeptide, anchoring it to the extracellular matrix. O-glycosylated on serine residues by POGLUT2 and POGLUT3.

It is found in the secreted. It localises to the extracellular space. The protein resides in the extracellular matrix. Key regulator of transforming growth factor beta (TGFB1, TGFB2 and TGFB3) that controls TGF-beta activation by maintaining it in a latent state during storage in extracellular space. Associates specifically via disulfide bonds with the Latency-associated peptide (LAP), which is the regulatory chain of TGF-beta, and regulates integrin-dependent activation of TGF-beta. Outcompeted by LRRC32/GARP for binding to LAP regulatory chain of TGF-beta. The protein is Latent-transforming growth factor beta-binding protein 1 of Mus musculus (Mouse).